A 460-amino-acid chain; its full sequence is Cysteine proteinase 7 (460 aa).

The N-terminal stretch at 1 to 17 is a signal peptide; sequence MKVLSALCVLLVSVATA. Positions 18-111 are cleaved as a propeptide — activation peptide; sequence KQQLSEVEYR…TESDKIFDAS (94 aa). Intrachain disulfides connect Cys131-Cys176 and Cys167-Cys210. The active site involves Cys134. 2 N-linked (GlcNAc...) asparagine glycosylation sites follow: Asn226 and Asn252. A disulfide bridge connects residues Cys268 and Cys445. His275 is a catalytic residue. Residues 285-409 form a disordered region; it reads GSGSSGSHGG…GSSSGSNSNG (125 aa). Positions 294–359 are enriched in low complexity; sequence GSQSQSAGSD…QSGSQSGNSG (66 aa). Positions 367-385 are enriched in gly residues; sequence AGSGSGSGSGSGSGSGSGS. The segment covering 386–409 has biased composition (low complexity); sequence VSGSASGSASGSASGSSSGSNSNG. Asn423 is a catalytic residue.

Belongs to the peptidase C1 family. Glycosylated; contains GlcNAc-alpha-1-P-Ser residues. Also N-glycosylated.

It localises to the lysosome. In Dictyostelium discoideum (Social amoeba), this protein is Cysteine proteinase 7 (cprG).